The following is a 191-amino-acid chain: Ribonuclease HII (191 aa).

The 185-residue stretch at 7–191 folds into the RNase H type-2 domain; it reads ILMAGVDEVG…YSPVADLISK (185 aa). A divalent metal cation-binding residues include aspartate 13, glutamate 14, and aspartate 103.

This sequence belongs to the RNase HII family. Mn(2+) serves as cofactor. The cofactor is Mg(2+).

The protein localises to the cytoplasm. It catalyses the reaction Endonucleolytic cleavage to 5'-phosphomonoester.. Its function is as follows. Endonuclease that specifically degrades the RNA of RNA-DNA hybrids. This Legionella pneumophila subsp. pneumophila (strain Philadelphia 1 / ATCC 33152 / DSM 7513) protein is Ribonuclease HII.